The primary structure comprises 395 residues: Probable protein arginine N-methyltransferase 6.2 (395 aa).

The segment covering 1–11 (MFAGGADGGNG) has biased composition (gly residues). The disordered stretch occupies residues 1–37 (MFAGGADGGNGHLPRPRRARRGGGGGGGMGSPPLGPP). Positions 45–390 (DMAYFKAYSH…YFTRDQWYVK (346 aa)) constitute an SAM-dependent MTase PRMT-type domain. Residues histidine 58, arginine 67, glycine 91, aspartate 113, and glutamate 142 each coordinate S-adenosyl-L-methionine. Residues glutamate 156 and glutamate 165 contribute to the active site. The segment at 300-324 (KKQANQCLDGNTQDASPSNKKKKAD) is disordered. Positions 302 to 317 (QANQCLDGNTQDASPS) are enriched in polar residues.

Belongs to the class I-like SAM-binding methyltransferase superfamily. Protein arginine N-methyltransferase family. PRMT6 subfamily.

Functionally, arginine methyltransferase that can both catalyze the formation of omega-N monomethylarginine (MMA) and asymmetrical dimethylarginine (aDMA). The sequence is that of Probable protein arginine N-methyltransferase 6.2 (PRMT6.2) from Oryza sativa subsp. indica (Rice).